Here is a 505-residue protein sequence, read N- to C-terminus: Flagellin (505 aa).

It belongs to the bacterial flagellin family.

The protein localises to the secreted. The protein resides in the bacterial flagellum. Functionally, flagellin is the subunit protein which polymerizes to form the filaments of bacterial flagella. The polypeptide is Flagellin (fliC) (Salmonella budapest).